Consider the following 361-residue polypeptide: Phenylalanine--tRNA ligase alpha subunit (361 aa).

Glutamate 260 contributes to the Mg(2+) binding site.

This sequence belongs to the class-II aminoacyl-tRNA synthetase family. Phe-tRNA synthetase alpha subunit type 1 subfamily. As to quaternary structure, tetramer of two alpha and two beta subunits. Mg(2+) is required as a cofactor.

The protein resides in the cytoplasm. The catalysed reaction is tRNA(Phe) + L-phenylalanine + ATP = L-phenylalanyl-tRNA(Phe) + AMP + diphosphate + H(+). This is Phenylalanine--tRNA ligase alpha subunit from Bartonella bacilliformis (strain ATCC 35685 / KC583 / Herrer 020/F12,63).